The primary structure comprises 309 residues: Aspartate carbamoyltransferase catalytic subunit (309 aa).

Positions 58 and 59 each coordinate carbamoyl phosphate. Lysine 86 is an L-aspartate binding site. The carbamoyl phosphate site is built by arginine 108, histidine 136, and glutamine 139. Residues arginine 170 and arginine 224 each coordinate L-aspartate. Positions 266 and 267 each coordinate carbamoyl phosphate.

The protein belongs to the aspartate/ornithine carbamoyltransferase superfamily. ATCase family. In terms of assembly, heterododecamer (2C3:3R2) of six catalytic PyrB chains organized as two trimers (C3), and six regulatory PyrI chains organized as three dimers (R2).

It carries out the reaction carbamoyl phosphate + L-aspartate = N-carbamoyl-L-aspartate + phosphate + H(+). It participates in pyrimidine metabolism; UMP biosynthesis via de novo pathway; (S)-dihydroorotate from bicarbonate: step 2/3. Its function is as follows. Catalyzes the condensation of carbamoyl phosphate and aspartate to form carbamoyl aspartate and inorganic phosphate, the committed step in the de novo pyrimidine nucleotide biosynthesis pathway. The sequence is that of Aspartate carbamoyltransferase catalytic subunit from Campylobacter concisus (strain 13826).